The following is a 156-amino-acid chain: Protein OXIDATIVE STRESS 3 LIKE 3 (156 aa).

The segment at 1-67 (MHYQEQMESL…GLSKHYKGKS (67 aa)) is disordered. Residues 13–26 (GEERRRGNYTRDVD) are compositionally biased toward basic and acidic residues.

The protein resides in the nucleus. In terms of biological role, promotes slightly the tolerance to oxidizing chemicals (e.g. diamide). This chain is Protein OXIDATIVE STRESS 3 LIKE 3, found in Arabidopsis thaliana (Mouse-ear cress).